The following is a 157-amino-acid chain: Small ribosomal subunit protein uS7 (157 aa).

The protein belongs to the universal ribosomal protein uS7 family. As to quaternary structure, part of the 30S ribosomal subunit. Contacts proteins S9 and S11.

One of the primary rRNA binding proteins, it binds directly to 16S rRNA where it nucleates assembly of the head domain of the 30S subunit. Is located at the subunit interface close to the decoding center, probably blocks exit of the E-site tRNA. This chain is Small ribosomal subunit protein uS7, found in Leptospira biflexa serovar Patoc (strain Patoc 1 / Ames).